We begin with the raw amino-acid sequence, 53 residues long: uncharacterized protein (53 aa).

Belongs to the ycf15 family.

It is found in the plastid. The protein resides in the chloroplast. This is an uncharacterized protein from Helianthus annuus (Common sunflower).